Consider the following 355-residue polypeptide: MAKFECTDEVTNFLTELPKCEHHLHLEGTLEPELLFQLVERNGVQLPGTFPKTVNELHVIYNNFADLQDFLNYYYIGCNVLLSEDDFFELAWSYFKRVSTQGLRHAEVFYDPQSHTSRGISLEVVTKGFERACAKAQEEFNISTKLIMCLLRHCPVEECMDTVKSAKSLIESGVIDGLGLDSSERPFPPELFVECYQLAKSYNKELQLTAHAGEEGDPSFVTNTLDLLETTRIDHGVRSIEDAELIKRLAAQKVMLTLCPLSNVKLQVVKDVSELPLQEFLDNDVPFSINSDDPAYFGGYILQNYLEVYSRFGWSKAVWAKIARQSIEGSWCDPKRKQELLSEVSEVVNKYVNLP.

Zn(2+)-binding residues include His23, His25, and His211. The Proton donor role is filled by Glu214. Asp292 contributes to the Zn(2+) binding site. Asp293 contacts substrate.

This sequence belongs to the metallo-dependent hydrolases superfamily. Adenosine and AMP deaminases family. Adenine deaminase type 2 subfamily. The cofactor is Zn(2+).

Its subcellular location is the cytoplasm. It is found in the nucleus. The enzyme catalyses adenine + H2O + H(+) = hypoxanthine + NH4(+). Functionally, catalyzes the hydrolytic deamination of adenine to hypoxanthine. Plays an important role in the purine salvage pathway and in nitrogen catabolism. The chain is Adenine deaminase from Kluyveromyces lactis (strain ATCC 8585 / CBS 2359 / DSM 70799 / NBRC 1267 / NRRL Y-1140 / WM37) (Yeast).